The following is a 297-amino-acid chain: 5'-3' exonuclease (297 aa).

The 5'-3' exonuclease domain occupies 171–262 (EPDQIVDFKA…MKLEKELFAI (92 aa)).

In terms of biological role, 5'-3' exonuclease acting preferentially on double-stranded DNA. This Mycoplasmopsis pulmonis (strain UAB CTIP) (Mycoplasma pulmonis) protein is 5'-3' exonuclease (polA).